Reading from the N-terminus, the 244-residue chain is Phosphoadenosine 5'-phosphosulfate reductase (244 aa).

Catalysis depends on Cys-239, which acts as the Nucleophile; cysteine thiosulfonate intermediate.

This sequence belongs to the PAPS reductase family. CysH subfamily.

The protein resides in the cytoplasm. The enzyme catalyses [thioredoxin]-disulfide + sulfite + adenosine 3',5'-bisphosphate + 2 H(+) = [thioredoxin]-dithiol + 3'-phosphoadenylyl sulfate. It functions in the pathway sulfur metabolism; hydrogen sulfide biosynthesis; sulfite from sulfate: step 3/3. In terms of biological role, catalyzes the formation of sulfite from phosphoadenosine 5'-phosphosulfate (PAPS) using thioredoxin as an electron donor. This Enterobacter sp. (strain 638) protein is Phosphoadenosine 5'-phosphosulfate reductase.